Reading from the N-terminus, the 141-residue chain is Large ribosomal subunit protein uL11 (141 aa).

It belongs to the universal ribosomal protein uL11 family. As to quaternary structure, part of the ribosomal stalk of the 50S ribosomal subunit. Interacts with L10 and the large rRNA to form the base of the stalk. L10 forms an elongated spine to which L12 dimers bind in a sequential fashion forming a multimeric L10(L12)X complex. Post-translationally, one or more lysine residues are methylated.

Forms part of the ribosomal stalk which helps the ribosome interact with GTP-bound translation factors. This Picosynechococcus sp. (strain ATCC 27264 / PCC 7002 / PR-6) (Agmenellum quadruplicatum) protein is Large ribosomal subunit protein uL11.